A 512-amino-acid polypeptide reads, in one-letter code: GMP synthase [glutamine-hydrolyzing] (512 aa).

Residues Gly9–Thr198 form the Glutamine amidotransferase type-1 domain. The active-site Nucleophile is Cys87. Active-site residues include His173 and Glu175. The region spanning Trp199–Lys387 is the GMPS ATP-PPase domain. Residue Ser226 to Thr232 participates in ATP binding.

The catalysed reaction is XMP + L-glutamine + ATP + H2O = GMP + L-glutamate + AMP + diphosphate + 2 H(+). Its pathway is purine metabolism; GMP biosynthesis; GMP from XMP (L-Gln route): step 1/1. Its function is as follows. Catalyzes the synthesis of GMP from XMP. The polypeptide is GMP synthase [glutamine-hydrolyzing] (guaA) (Aeropyrum pernix (strain ATCC 700893 / DSM 11879 / JCM 9820 / NBRC 100138 / K1)).